A 312-amino-acid chain; its full sequence is tRNA dimethylallyltransferase (312 aa).

15 to 22 is a binding site for ATP; it reads GPTAAGKS. Residue 17–22 participates in substrate binding; sequence TAAGKS. The interval 40–43 is interaction with substrate tRNA; that stretch reads DSMQ.

It belongs to the IPP transferase family. Monomer. The cofactor is Mg(2+).

It catalyses the reaction adenosine(37) in tRNA + dimethylallyl diphosphate = N(6)-dimethylallyladenosine(37) in tRNA + diphosphate. Functionally, catalyzes the transfer of a dimethylallyl group onto the adenine at position 37 in tRNAs that read codons beginning with uridine, leading to the formation of N6-(dimethylallyl)adenosine (i(6)A). This chain is tRNA dimethylallyltransferase, found in Streptomyces avermitilis (strain ATCC 31267 / DSM 46492 / JCM 5070 / NBRC 14893 / NCIMB 12804 / NRRL 8165 / MA-4680).